The chain runs to 754 residues: Glutathione biosynthesis bifunctional protein GshAB (754 aa).

Positions 1–332 (MTLNQLLQKL…QGHALNEKIA (332 aa)) are glutamate--cysteine ligase. Residues 488–746 (KKILADAGFP…ITTKILDKLF (259 aa)) enclose the ATP-grasp domain. 515–573 (PLIKDKQIVVKPKSTNFGLGISIFQEPASLDNYQKALEIAFAEDTSVLVEEFIPGTEYR) is an ATP binding site. Residues D695, E716, and N718 each contribute to the Mg(2+) site. Residues D695, E716, and N718 each coordinate Mn(2+).

The protein in the N-terminal section; belongs to the glutamate--cysteine ligase type 1 family. Type 2 subfamily. Monomer. Requires Mg(2+) as cofactor. It depends on Mn(2+) as a cofactor.

The enzyme catalyses L-cysteine + L-glutamate + ATP = gamma-L-glutamyl-L-cysteine + ADP + phosphate + H(+). It catalyses the reaction gamma-L-glutamyl-L-cysteine + glycine + ATP = glutathione + ADP + phosphate + H(+). It participates in sulfur metabolism; glutathione biosynthesis; glutathione from L-cysteine and L-glutamate: step 1/2. Its pathway is sulfur metabolism; glutathione biosynthesis; glutathione from L-cysteine and L-glutamate: step 2/2. Functionally, synthesizes glutathione from L-glutamate and L-cysteine via gamma-L-glutamyl-L-cysteine. The polypeptide is Glutathione biosynthesis bifunctional protein GshAB (Streptococcus thermophilus (strain CNRZ 1066)).